A 527-amino-acid chain; its full sequence is MTKHNEQEIDRRRTFAIISHPDAGKTTITEKLLLFGGAIQQAGEVRARKAARHATSDWMEMEKQRGISVTSSVMKFTYRNYEVNLLDTPGHNDFSEDTYRVLTAVDSALMVIDAVKGVESQTIKLLDVCRLRHTPIMTFVNKLDREGRDPFELIDEIEKVLKIQCAPMTWPIGMGKRFRGTYHLYTKELIIFDAEAERGTGSIVSLSGLDDPRLDEILGSQAAELRGDIELLEGAAHPFEEEAYLAGLQTPVFFGSAINTFGVQQLLDTFVENAPAPLPREAVTRTVSPYEEPFAAFAFKIQANMDPAHRDRIAFFRICSGKFTRGMKVRHVRLGREVAINNATIFMAQDRTHVDEAFPGDIIGIHNHGTIKIGDTFTMGEELKFTGIPNFAPEHFRKVRLLDPLKSKALEKGLTQLAEEGTTQVFRPLMGADWIVGAVGILQFDVVMHRLEHEYNVKATYEPAAYATARWVTGEKKKLEEFQKKEVMSCYIDGEGNLAYLASSQWRLDNTMDNWKDLQFHATREHS.

Residues Asp10–Leu278 form the tr-type G domain. GTP-binding positions include Ser19–Thr26, Asp87–His91, and Asn141–Asp144.

Belongs to the TRAFAC class translation factor GTPase superfamily. Classic translation factor GTPase family. PrfC subfamily.

Its subcellular location is the cytoplasm. Functionally, increases the formation of ribosomal termination complexes and stimulates activities of RF-1 and RF-2. It binds guanine nucleotides and has strong preference for UGA stop codons. It may interact directly with the ribosome. The stimulation of RF-1 and RF-2 is significantly reduced by GTP and GDP, but not by GMP. The chain is Peptide chain release factor 3 from Geobacter metallireducens (strain ATCC 53774 / DSM 7210 / GS-15).